Consider the following 675-residue polypeptide: MPGKEENDTLEKSLKELNLTSDEMTKFEKAFKDPEFIKLFEEYAKEVSDPKVKAETDAYLRQIEQQGRAEDVYGAGTQLIVPDPAGAVIKTKVVSSSASKKQQQEQEKQEKEQQQQAAGAGKPEGPGKQGALPVGQKVFINICTCDKLERYSLTDAQDPATGRLRPKLTIPLSLGPVRQGADKQGAPAAVYDFVVHPDSWTFAAGNAAGLATLADTALDHVEQVGRCRLVRAWKRLNCRYKGTEGAAEPPVQCIRTSAAAAAGAAGEGAGGRVRPRPDVPGVPDLPGAKTAPPAAAGAAATAAAAAGAAEGGAGSSSRSTFSFDKSRKAGGTEAAGAVAKQEATITDPARPGYRHPDGAVTPEWGLLHRGEADLGEAWGDAGKGLAAGGRVPKELVVRVTLPDVSSAAPVDLDVGARCLALTVPNRYRLSVQLPYGVDDAKGRAKFDKARKVLEVTLPVVPPPAPPPGAAAAARAGLALIQELGGSEEAAEVKAEVEVEVADVMGRDQEAAHAKSEAGAGAGVKSPHTAAAASSGAAPAPAAASEEEEEEDKEDGGPAAGSGGDPAAAAAAAGASSGRELTENERKWRELHARQQQEEQEQQEAAEAAAAAAAAAAEPSSRSQLTGTVAQGGAAAAAESVAAAKQQVQQQPVAAAAAPTAVLRPRLNRELAMELD.

Disordered stretches follow at residues 98–131 (ASKKQQQEQEKQEKEQQQQAAGAGKPEGPGKQGA), 265–293 (AGEGAGGRVRPRPDVPGVPDLPGAKTAPP), 310–340 (EGGAGSSSRSTFSFDKSRKAGGTEAAGAVAK), and 509–659 (EAAH…AAPT). The span at 102 to 113 (QQQEQEKQEKEQ) shows a compositional bias: basic and acidic residues. Over residues 279–293 (VPGVPDLPGAKTAPP) the composition is skewed to low complexity. A compositionally biased stretch (low complexity) spans 529 to 543 (AAAASSGAAPAPAAA). The span at 544 to 553 (SEEEEEEDKE) shows a compositional bias: acidic residues. The segment covering 564–577 (DPAAAAAAAGASSG) has biased composition (low complexity). Basic and acidic residues predominate over residues 579–596 (ELTENERKWRELHARQQQ). Low complexity-rich tracts occupy residues 604–617 (AAEAAAAAAAAAAE) and 628–659 (VAQGGAAAAAESVAAAKQQVQQQPVAAAAAPT).

This sequence belongs to the PIH1 family. Kintoun subfamily.

It localises to the cytoplasm. Required for cytoplasmic pre-assembly of axonemal dyneins, thereby playing a central role in motility in cilia and flagella. Involved in pre-assembly of dynein arm complexes in the cytoplasm before intraflagellar transport loads them for the ciliary compartment. In Chlamydomonas reinhardtii (Chlamydomonas smithii), this protein is Protein kintoun (pf13).